The chain runs to 412 residues: MAAVDHPASSLPHLQLLSDLTPPSLERTWLTAPHPRLPIVATCSSDKTVRVYSLTNFRLLSTISGGHKRSVRTAAWKPHVQGESVLATGSFDATAGIWRRWDSYGQTTGDEGWGLGQETTTNKSESQEEQAQETDILRQQQATHNENDGADDEDEEWRFAVLLDGHDSEVKSVSWSPSGMLLATCSRDKSIWIWEDLDDGDNNFETVAVMQEHEGDVKCVAWHPVEECLASASYDDTIRIWREDLDDWGQVACLRGHEGTVWFLSGPRIVSCSDDRTVRVWRRQPKEQAAAGGTGMPSILRPTGLDETWEEETVLPKVHDLAVYAVAWSKRTGLLASVGADGRIVIYEERLGVVRTEWVILAVLPGAHGIYEINHVAWANRADRDRDVSKEEEVLVTTADDGSVKVDETVGL.

WD repeat units follow at residues 20-62 (LTPP…LLST), 66-108 (GHKR…GQTT), 165-204 (GHDS…DNNF), 212-255 (EHEG…ACLR), 257-291 (HEGT…QAAA), 318-357 (VHDL…VRTE), and 367-407 (AHGI…VKVD). Residues 108–154 (TGDEGWGLGQETTTNKSESQEEQAQETDILRQQQATHNENDGADDED) form a disordered region.

This sequence belongs to the WD repeat CIA1 family.

In terms of biological role, essential component of the cytosolic iron-sulfur (Fe/S) protein assembly machinery. Required for the maturation of extramitochondrial Fe/S proteins. This is Probable cytosolic iron-sulfur protein assembly protein 1 (cia1) from Aspergillus niger (strain ATCC MYA-4892 / CBS 513.88 / FGSC A1513).